Reading from the N-terminus, the 142-residue chain is Hemoglobin subunit alpha-5 (142 aa).

One can recognise a Globin domain in the interval 2–142 (TFSSAEKAAI…VSAVLVSKYR (141 aa)). O2 is bound at residue H59. H88 is a heme b binding site.

Belongs to the globin family. Heterotetramer of two alpha chains and two beta chains. In terms of tissue distribution, red blood cells.

Its function is as follows. This is a larval (tadpole) alpha-globin. The protein is Hemoglobin subunit alpha-5 (hba5) of Xenopus laevis (African clawed frog).